The sequence spans 195 residues: Pyridoxal 5'-phosphate synthase subunit PdxT (195 aa).

55–57 (GES) contacts L-glutamine. Cys84 acts as the Nucleophile in catalysis. Residues Arg111 and 139–140 (IR) contribute to the L-glutamine site. Residues His175 and Glu177 each act as charge relay system in the active site.

It belongs to the glutaminase PdxT/SNO family. In the presence of PdxS, forms a dodecamer of heterodimers. Only shows activity in the heterodimer.

It carries out the reaction aldehydo-D-ribose 5-phosphate + D-glyceraldehyde 3-phosphate + L-glutamine = pyridoxal 5'-phosphate + L-glutamate + phosphate + 3 H2O + H(+). The catalysed reaction is L-glutamine + H2O = L-glutamate + NH4(+). It participates in cofactor biosynthesis; pyridoxal 5'-phosphate biosynthesis. Functionally, catalyzes the hydrolysis of glutamine to glutamate and ammonia as part of the biosynthesis of pyridoxal 5'-phosphate. The resulting ammonia molecule is channeled to the active site of PdxS. The chain is Pyridoxal 5'-phosphate synthase subunit PdxT from Methanosphaerula palustris (strain ATCC BAA-1556 / DSM 19958 / E1-9c).